The sequence spans 1441 residues: Pleiotropic drug resistance protein TUR2 (1441 aa).

Positions 158-430 constitute an ABC transporter 1 domain; that stretch reads LSALHLMPSG…FESMGFKCPE (273 aa). Residue 191–198 coordinates ATP; the sequence is GPPGAGKT. In terms of domain architecture, ABC transmembrane type-2 1 spans 508–721; sequence ELLKACIDRE…AQNAIAVNEF (214 aa). A run of 6 helical transmembrane segments spans residues 526–546, 559–579, 614–634, 646–666, 671–691, and 756–776; these read FVYI…MTVF, ATIF…NGFA, IPIS…VIGF, LLLV…AAVG, VADT…GFII, and IGVG…ILFL. The ABC transporter 2 domain occupies 843-1095; that stretch reads ITFDNVKYSV…HLIKYFESID (253 aa). 888–895 contacts ATP; the sequence is GVSGRGKT. One can recognise an ABC transmembrane type-2 2 domain in the interval 1168–1382; the sequence is MQCLACLWKQ…TLYGLVVSQF (215 aa). Helical transmembrane passes span 1187–1207, 1215–1235, 1275–1295, 1302–1322, 1332–1352, 1363–1383, and 1413–1433; these read YTAT…TIFW, TSLD…FIGI, VPHI…MIGF, FLWY…YGMM, IAAI…GFII, WYYW…SQFG, and VVGV…AFSI.

The protein belongs to the ABC transporter superfamily. ABCG family. PDR (TC 3.A.1.205) subfamily. In terms of tissue distribution, ubiquitous.

Its subcellular location is the cell membrane. In terms of biological role, may be a general defense protein. Seems involved in turion (dormant buds) formation. Confers resistance to the diterpenoid antifungal agent sclareol. In Spirodela polyrhiza (Giant duckweed), this protein is Pleiotropic drug resistance protein TUR2 (TUR2).